We begin with the raw amino-acid sequence, 400 residues long: Ornithine aminotransferase (400 aa).

Lys254 bears the N6-(pyridoxal phosphate)lysine mark.

The protein belongs to the class-III pyridoxal-phosphate-dependent aminotransferase family. OAT subfamily. Pyridoxal 5'-phosphate is required as a cofactor.

The protein localises to the cytoplasm. It catalyses the reaction a 2-oxocarboxylate + L-ornithine = L-glutamate 5-semialdehyde + an L-alpha-amino acid. Its pathway is amino-acid biosynthesis; L-proline biosynthesis; L-glutamate 5-semialdehyde from L-ornithine: step 1/1. Functionally, catalyzes the interconversion of ornithine to glutamate semialdehyde. In Exiguobacterium sp. (strain ATCC BAA-1283 / AT1b), this protein is Ornithine aminotransferase.